Here is a 186-residue protein sequence, read N- to C-terminus: Ribosome-recycling factor (186 aa).

A disordered region spans residues D135–M164.

Belongs to the RRF family.

The protein resides in the cytoplasm. Responsible for the release of ribosomes from messenger RNA at the termination of protein biosynthesis. May increase the efficiency of translation by recycling ribosomes from one round of translation to another. This Rhizobium meliloti (strain 1021) (Ensifer meliloti) protein is Ribosome-recycling factor.